The sequence spans 758 residues: Microtubule-associated protein tau (758 aa).

Positions 1 to 26 are enriched in basic and acidic residues; sequence MAEPHQEFDVTEDHAGTYGLGDRKDQ. A disordered region spans residues 1–573; the sequence is MAEPHQEFDV…PVPMPDLKNV (573 aa). An N-acetylalanine modification is found at A2. Phosphotyrosine is present on residues Y18 and Y29. K44 is covalently cross-linked (Glycyl lysine isopeptide (Lys-Gly) (interchain with G-Cter in ubiquitin)). 2 positions are modified to phosphoserine: S46 and S61. The span at 61 to 71 shows a compositional bias: polar residues; the sequence is SETSDAKSTPT. A phosphothreonine mark is found at T69, T71, and T111. Composition is skewed to basic and acidic residues over residues 179-189 and 207-216; these read EGGRHAPELLK and GGKERPGSKE. S214 is modified (phosphoserine). Residues 217 to 228 show a composition bias toward acidic residues; sequence EVDEDRDVDESS. Residues 314-323 are compositionally biased toward basic and acidic residues; it reads EQAHSEEHLR. The span at 325–340 shows a compositional bias: low complexity; the sequence is AAFPGAPGEGPEAQGP. 2 stretches are compositionally biased toward basic and acidic residues: residues 344-356 and 381-393; these read EDAK…EPSE and KSKD…DKKA. Positions 440–452 are enriched in polar residues; the sequence is KYVSSVTPRTGSS. Residues 455–466 are compositionally biased toward basic and acidic residues; that stretch reads KEMKLKGADGKT. T470 is modified (phosphothreonine). The residue at position 472 (R472) is an Omega-N-methylarginine. At K480 the chain carries N6,N6-dimethyllysine; alternate. At K480 the chain carries N6-acetyllysine; alternate. Phosphothreonine occurs at positions 486, 492, and 498. Over residues 491-503 the composition is skewed to pro residues; that stretch reads KTPPAPKTPPSSG. A phosphoserine mark is found at S502, S508, and S512. Positions 504 to 531 are enriched in low complexity; it reads EPPKSGDRSGYSSPGSPGTPGSRSRTPS. A Phosphotyrosine modification is found at Y514. Phosphoserine occurs at positions 515, 516, and 519. Phosphothreonine is present on residues T522 and T529. At S531 the chain carries Phosphoserine. Position 534 is a phosphothreonine (T534). K542 carries the post-translational modification N6-acetyllysine. T548 bears the Phosphothreonine mark. S552 and S554 each carry phosphoserine. Tau/MAP repeat units follow at residues 561–591, 592–622, 623–653, and 654–685; these read QTAP…GGGK, VQII…GGGS, VQIV…GGGQ, and VEVK…GGGH. K571 participates in a covalent cross-link: Glycyl lysine isopeptide (Lys-Gly) (interchain with G-Cter in ubiquitin). An N6-acetyllysine; alternate modification is found at K576. N6-methyllysine; alternate is present on K576. K576 is covalently cross-linked (Glycyl lysine isopeptide (Lys-Gly) (interchain with G-Cter in ubiquitin); alternate). Position 579 is a phosphoserine (S579). K584 participates in a covalent cross-link: Glycyl lysine isopeptide (Lys-Gly) (interchain with G-Cter in ubiquitin). K598 is modified (N6-acetyllysine; alternate). Residue K598 forms a Glycyl lysine isopeptide (Lys-Gly) (interchain with G-Cter in ubiquitin); alternate linkage. Phosphoserine is present on residues S602 and S606. An N6-acetyllysine modification is found at K607. A Phosphoserine modification is found at S610. At K615 the chain carries N6-acetyllysine; alternate. K615 participates in a covalent cross-link: Glycyl lysine isopeptide (Lys-Gly) (interchain with G-Cter in ubiquitin); alternate. Residue S622 is modified to Phosphoserine. K628 is subject to N6,N6-dimethyllysine; alternate. An N6-acetyllysine; alternate mark is found at K628, K634, and K638. Residues K628, K634, and K638 each participate in a glycyl lysine isopeptide (Lys-Gly) (interchain with G-Cter in ubiquitin); alternate cross-link. Position 641 is a phosphoserine (S641). 3 positions are modified to N6-acetyllysine; alternate: K648, K660, and K664. Glycyl lysine isopeptide (Lys-Gly) (interchain with G-Cter in ubiquitin); alternate cross-links involve residues K648, K660, and K664. At R666 the chain carries Omega-N-methylarginine. At S669 the chain carries Phosphoserine. K670 is covalently cross-linked (Glycyl lysine isopeptide (Lys-Gly) (interchain with G-Cter in ubiquitin)). Position 673 is a phosphoserine (S673). The residue at position 686 (K686) is an N6-acetyllysine; alternate. A Glycyl lysine isopeptide (Lys-Gly) (interchain with G-Cter in ubiquitin); alternate cross-link involves residue K686. A Glycyl lysine isopeptide (Lys-Gly) (interchain with G-Cter in ubiquitin) cross-link involves residue K692. K702 carries the post-translational modification N6-acetyllysine; alternate. Residue K702 forms a Glycyl lysine isopeptide (Lys-Gly) (interchain with G-Cter in ubiquitin); alternate linkage. Y711 carries the post-translational modification Phosphotyrosine. A phosphoserine mark is found at S713 and S717. The tract at residues 715–734 is disordered; it reads VVSGDTSPRHLSNVSSTGSI. Over residues 718 to 733 the composition is skewed to polar residues; that stretch reads GDTSPRHLSNVSSTGS. Residue T720 is modified to Phosphothreonine. A phosphoserine mark is found at S721, S726, S733, and S739. T744 carries the phosphothreonine modification.

As to quaternary structure, interacts with MARK1, MARK2, MARK3 and MARK4. Interacts with SQSTM1 when polyubiquitinated. Interacts with PSMC2 through SQSTM1. Interacts with FKBP4. Binds to CSNK1D. Interacts with SGK1. Interacts with EPM2A; the interaction dephosphorylates MAPT at Ser-396. Interacts with PIN1. Interacts with LRRK2. Interacts with LRP1, leading to endocytosis; this interaction is reduced in the presence of LRPAP1/RAP. Post-translationally, polyubiquitinated. Requires functional TRAF6 and may provoke SQSTM1-dependent degradation by the proteasome. In terms of processing, phosphorylation at various serine and threonine residues in S-P or T-P motifs by proline-directed protein kinases (PDPK1, CDK1, CDK5, GSK3, MAPK) (a few sites per protein in interphase, more in mitosis), and at serine residues in K-X-G-S motifs by MAP/microtubule affinity-regulating kinase (MARK1, MARK2, MARK3 or MARK4), causing detachment from microtubules, and their disassembly. Phosphorylation at Ser-579 by BRSK1 and BRSK2 in neurons affects ability to bind microtubules and plays a role in neuron polarization. Phosphorylated by PHK. Dephosphorylation at several serine and threonine residues by the serine/threonine phosphatase PPP5C. Phosphorylation at Ser-214 by SGK1 mediates microtubule depolymerization and neurite formation in hippocampal neurons.

The protein resides in the cytoplasm. The protein localises to the cytosol. Its subcellular location is the cell membrane. It is found in the cytoskeleton. It localises to the cell projection. The protein resides in the axon. The protein localises to the dendrite. In terms of biological role, promotes microtubule assembly and stability, and might be involved in the establishment and maintenance of neuronal polarity. The C-terminus binds axonal microtubules while the N-terminus binds neural plasma membrane components, suggesting that tau functions as a linker protein between both. Axonal polarity is predetermined by tau localization (in the neuronal cell) in the domain of the cell body defined by the centrosome. The short isoforms allow plasticity of the cytoskeleton whereas the longer isoforms may preferentially play a role in its stabilization. This Pongo pygmaeus (Bornean orangutan) protein is Microtubule-associated protein tau (MAPT).